Consider the following 977-residue polypeptide: uncharacterized protein (977 aa).

The disordered stretch occupies residues 100–152 (ATSPLQQNGKSRDTEKPPSMKEKDLSSNSSSQHDKAFHERVDQGKNKSSTTKY). 2 stretches are compositionally biased toward basic and acidic residues: residues 109-124 (KSRD…EKDL) and 131-144 (QHDK…DQGK). At serine 165 the chain carries Phosphoserine. Composition is skewed to polar residues over residues 166–175 (PGQSVNSLKP) and 183–193 (STKSSTSSEMH). Positions 166 to 194 (PGQSVNSLKPNSGDEVPSTKSSTSSEMHT) are disordered.

This is an uncharacterized protein from Schizosaccharomyces pombe (strain 972 / ATCC 24843) (Fission yeast).